We begin with the raw amino-acid sequence, 67 residues long: Alpha-conotoxin G1.5 (67 aa).

An N-terminal signal peptide occupies residues 1–21 (MGMRMMFTVFLLVALATTVVS). Residues 22–47 (FTSDRASDRRNAAVKAFDLISSTVKK) constitute a propeptide that is removed on maturation. Cystine bridges form between C49-C55 and C50-C63. Q65 is subject to Glutamine amide.

The protein belongs to the conotoxin A superfamily. Expressed by the venom duct.

The protein resides in the secreted. Functionally, alpha-conotoxins act on postsynaptic membranes, they bind to the nicotinic acetylcholine receptors (nAChR) and thus inhibit them. Globular isomer (C1-C3; C2-C4) selectively inhibits neuronal (non-muscle) nAChR subtypes particularly human alpha-3-beta-2/CHRNA3-CHRNB2 (IC(50)=35.7 nM) and alpha-9-alpha-10/CHRNA9-CHRNA10 nAChRs (IC(50)=569 nM), while the ribbon isomer (C1-C4; C2-C3) shows weak inhibition on alpha-3-beta-2/CHRNA3-CHRNB2, but not on all other receptors tested. This chain is Alpha-conotoxin G1.5, found in Conus geographus (Geography cone).